The chain runs to 453 residues: Ribulose bisphosphate carboxylase large chain (453 aa).

The propeptide occupies 1–2 (MS). Position 3 is an N-acetylproline (Pro-3). Lys-14 carries the post-translational modification N6,N6,N6-trimethyllysine. Asn-123 and Thr-173 together coordinate substrate. Lys-175 serves as the catalytic Proton acceptor. Lys-177 contacts substrate. The Mg(2+) site is built by Lys-201, Asp-203, and Glu-204. At Lys-201 the chain carries N6-carboxylysine. The active-site Proton acceptor is His-294. Residues Arg-295, His-327, and Ser-379 each coordinate substrate.

The protein belongs to the RuBisCO large chain family. Type I subfamily. In terms of assembly, heterohexadecamer of 8 large chains and 8 small chains; disulfide-linked. The disulfide link is formed within the large subunit homodimers. It depends on Mg(2+) as a cofactor. The disulfide bond which can form in the large chain dimeric partners within the hexadecamer appears to be associated with oxidative stress and protein turnover.

The protein localises to the plastid. It localises to the chloroplast. The enzyme catalyses 2 (2R)-3-phosphoglycerate + 2 H(+) = D-ribulose 1,5-bisphosphate + CO2 + H2O. The catalysed reaction is D-ribulose 1,5-bisphosphate + O2 = 2-phosphoglycolate + (2R)-3-phosphoglycerate + 2 H(+). RuBisCO catalyzes two reactions: the carboxylation of D-ribulose 1,5-bisphosphate, the primary event in carbon dioxide fixation, as well as the oxidative fragmentation of the pentose substrate in the photorespiration process. Both reactions occur simultaneously and in competition at the same active site. In Galium elongatum (Great marsh bedstraw), this protein is Ribulose bisphosphate carboxylase large chain.